Here is a 448-residue protein sequence, read N- to C-terminus: Acyl-lipid (9-3)-desaturase (448 aa).

The 85-residue stretch at Lys6–Ser90 folds into the Cytochrome b5 heme-binding domain. His41 and His64 together coordinate heme. A run of 2 helical transmembrane segments spans residues Ile112 to Leu132 and Val137 to Ile157. Positions His159 to His163 match the Histidine box-1 motif. A helical transmembrane segment spans residues Leu172–Trp192. A Histidine box-2 motif is present at residues His196 to His200. 3 consecutive transmembrane segments (helical) span residues Leu212–Phe232, Phe254–Leu274, and Leu286–Trp306. Residues Gln373–His377 carry the Histidine box-3 motif.

This sequence belongs to the fatty acid desaturase type 1 family.

The protein localises to the endoplasmic reticulum membrane. The enzyme catalyses (9Z,12Z,15Z)-octadecatrienoyl-containing glycerolipid + 2 Fe(II)-[cytochrome b5] + O2 + 2 H(+) = (6Z,9Z,12Z,15Z)-octadecatetraenoyl-containing glycerolipid + 2 Fe(III)-[cytochrome b5] + 2 H2O. It catalyses the reaction a (9Z,12Z)-octadecadienoyl-containing glycerolipid + 2 Fe(II)-[cytochrome b5] + O2 + 2 H(+) = (6Z,9Z,12Z)-octadecatrienoyl-containing glycerolipid + 2 Fe(III)-[cytochrome b5] + 2 H2O. Its pathway is lipid metabolism; polyunsaturated fatty acid biosynthesis. Fatty acid desaturase able to introduce a delta(6)-double bond into delta(9)-unsaturated fatty-acid substrates. Can use both linoleic acid (18:2(9Z,12Z)) and alpha-linolenic acid (18:3(9Z,12Z,15Z)) as substrates. This chain is Acyl-lipid (9-3)-desaturase, found in Borago officinalis (Bourrache).